Here is a 166-residue protein sequence, read N- to C-terminus: Phosphodiesterase MJ0936 (166 aa).

Mn(2+) contacts are provided by aspartate 8, histidine 10, aspartate 36, asparagine 59, histidine 97, histidine 120, and histidine 122. Residues aspartate 8, histidine 10, aspartate 36, asparagine 59, histidine 97, histidine 120, and histidine 122 each contribute to the Ni(2+) site.

This sequence belongs to the metallophosphoesterase superfamily. YfcE family. In terms of assembly, monomer. Requires Ni(2+) as cofactor. Mn(2+) serves as cofactor.

With respect to regulation, competitively inhibited by phosphate. Its function is as follows. Shows phosphodiesterase activity. Hydrolyzes phosphodiesters bonds in the artificial chromogenic substrates bis-p-nitrophenyl phosphate (bis-pNPP), and less efficiently thymidine 5'-monophosphate p-nitrophenyl ester (pNP-TMP) and p-nitrophenylphosphorylcholine (pNPPC). No catalytic activity was found toward cAMP or cGMP, nucleotides or phospholipase substrates such as phosphatidylcholine. The physiological substrate is unknown. In Methanocaldococcus jannaschii (strain ATCC 43067 / DSM 2661 / JAL-1 / JCM 10045 / NBRC 100440) (Methanococcus jannaschii), this protein is Phosphodiesterase MJ0936.